An 86-amino-acid chain; its full sequence is Large ribosomal subunit protein uL23 (86 aa).

The protein belongs to the universal ribosomal protein uL23 family. In terms of assembly, part of the 50S ribosomal subunit. Contacts protein L29.

Its function is as follows. Binds to 23S rRNA. One of the proteins that surrounds the polypeptide exit tunnel on the outside of the ribosome. This Methanosphaera stadtmanae (strain ATCC 43021 / DSM 3091 / JCM 11832 / MCB-3) protein is Large ribosomal subunit protein uL23.